A 123-amino-acid polypeptide reads, in one-letter code: Small ribosomal subunit protein uS12 (123 aa).

The disordered stretch occupies residues 1–25 (MPTINQLIRKRRKSSLARKKSPALQ). The segment covering 8 to 21 (IRKRRKSSLARKKS) has biased composition (basic residues). Aspartate 89 is subject to 3-methylthioaspartic acid.

It belongs to the universal ribosomal protein uS12 family. Part of the 30S ribosomal subunit. Contacts proteins S8 and S17. May interact with IF1 in the 30S initiation complex.

With S4 and S5 plays an important role in translational accuracy. Its function is as follows. Interacts with and stabilizes bases of the 16S rRNA that are involved in tRNA selection in the A site and with the mRNA backbone. Located at the interface of the 30S and 50S subunits, it traverses the body of the 30S subunit contacting proteins on the other side and probably holding the rRNA structure together. The combined cluster of proteins S8, S12 and S17 appears to hold together the shoulder and platform of the 30S subunit. This Chlamydia pneumoniae (Chlamydophila pneumoniae) protein is Small ribosomal subunit protein uS12.